The following is a 129-amino-acid chain: Small ribosomal subunit protein uS11 (129 aa).

Belongs to the universal ribosomal protein uS11 family. In terms of assembly, part of the 30S ribosomal subunit. Interacts with proteins S7 and S18. Binds to IF-3.

Its function is as follows. Located on the platform of the 30S subunit, it bridges several disparate RNA helices of the 16S rRNA. Forms part of the Shine-Dalgarno cleft in the 70S ribosome. This Thermosipho melanesiensis (strain DSM 12029 / CIP 104789 / BI429) protein is Small ribosomal subunit protein uS11.